The primary structure comprises 1312 residues: Multidrug resistance protein 3 (1312 aa).

Residues 51–71 form a helical membrane-spanning segment; it reads GFIDYILLIGGIIGAMAAGVL. One can recognise an ABC transmembrane type-1 1 domain in the interval 59–369; it reads IGGIIGAMAA…VAMPINALST (311 aa). A glycan (N-linked (GlcNAc...) asparagine) is linked at Asn-98. Transmembrane regions (helical) follow at residues 127–147, 197–217, 224–244, 302–322, and 344–364; these read IYFAIGTTVGMFLMHFCFFVL, KFGVLFQTICGFIAGYAIGFS, LVIMAVTPFMLITVLFLGFFA, VVGVGLGMLLFFMMGSLALGS, and MVVFMSVLMATMSIAQVAMPI. One can recognise an ABC transporter 1 domain in the interval 404–643; sequence IKLEDVQFRY…KATYYGLVKR (240 aa). 439–446 contributes to the ATP binding site; it reads GASGCGKS. The ABC transmembrane type-1 2 domain maps to 724-1033; sequence LLSFLGLIGG…LGQMIPDVGK (310 aa). 2 helical membrane-spanning segments follow: residues 725–745 and 776–796; these read LSFLGLIGGIGAGAVFPFYMI and IWILLFGLAVFVTTYMYLGLF. The N-linked (GlcNAc...) asparagine glycan is linked to Asn-819. Transmembrane regions (helical) follow at residues 852-872, 874-894, and 958-978; these read VGNVVNTLSSVGFGVGIAFYY, WKVALCVMAIAPVLIVIVFLN, and AFVSAANTFVTSCISAYSFYI. The ABC transporter 2 domain occupies 1068–1307; it reads IEFKDICFRY…KGFYYTLAMQ (240 aa). Residue 1103 to 1110 participates in ATP binding; it reads GASGCGKS.

It belongs to the ABC transporter superfamily. ABCB family. Multidrug resistance exporter (TC 3.A.1.201) subfamily.

Its subcellular location is the membrane. The enzyme catalyses ATP + H2O + xenobioticSide 1 = ADP + phosphate + xenobioticSide 2.. Its function is as follows. Energy-dependent efflux pump responsible for decreased drug accumulation in multidrug resistance parasites. This Entamoeba histolytica (strain ATCC 30459 / HM-1:IMSS / ABRM) protein is Multidrug resistance protein 3.